A 273-amino-acid polypeptide reads, in one-letter code: MRGLGKGSSAITVVNAFATGKGGAIGIDLWTEAKVKITDGEVKGKILVNGLEFNDFRVVNAVLDVMRRYSGIEFGIEFEINSEIPVGKGLKSSSAVANALVEAIARALRLNIPGIKVVKLGVEAAKKAGVTLTGAFDDACASYFGGLCLTDNLRVELLKRIEIDELPVVILVPNETVLTEELKGVDFLKIAPYVEEAFKLAIKGEWKKALVLNGLIYSTFLSYPPEPISKALHLGAVVGLSGKGPSVFAITDEPERIEEVWREFGDVIITSTR.

85-95 is a binding site for ATP; it reads PVGKGLKSSSA.

Belongs to the GHMP kinase family. Archaeal shikimate kinase subfamily.

The protein resides in the cytoplasm. The catalysed reaction is shikimate + ATP = 3-phosphoshikimate + ADP + H(+). The protein operates within metabolic intermediate biosynthesis; chorismate biosynthesis; chorismate from D-erythrose 4-phosphate and phosphoenolpyruvate: step 5/7. This chain is Shikimate kinase, found in Pyrococcus furiosus (strain ATCC 43587 / DSM 3638 / JCM 8422 / Vc1).